Here is a 160-residue protein sequence, read N- to C-terminus: S-adenosylmethionine decarboxylase proenzyme (160 aa).

Residue Ser-73 is the Schiff-base intermediate with substrate; via pyruvic acid of the active site. Residue Ser-73 is modified to Pyruvic acid (Ser); by autocatalysis. Residue His-78 is the Proton acceptor; for processing activity of the active site. The active-site Proton donor; for catalytic activity is the Cys-93.

This sequence belongs to the prokaryotic AdoMetDC family. Type 1 subfamily. As to quaternary structure, heterotetramer of two alpha and two beta chains arranged as a dimer of alpha/beta heterodimers. Requires pyruvate as cofactor. Is synthesized initially as an inactive proenzyme. Formation of the active enzyme involves a self-maturation process in which the active site pyruvoyl group is generated from an internal serine residue via an autocatalytic post-translational modification. Two non-identical subunits are generated from the proenzyme in this reaction, and the pyruvate is formed at the N-terminus of the alpha chain, which is derived from the carboxyl end of the proenzyme. The post-translation cleavage follows an unusual pathway, termed non-hydrolytic serinolysis, in which the side chain hydroxyl group of the serine supplies its oxygen atom to form the C-terminus of the beta chain, while the remainder of the serine residue undergoes an oxidative deamination to produce ammonia and the pyruvoyl group blocking the N-terminus of the alpha chain.

It catalyses the reaction S-adenosyl-L-methionine + H(+) = S-adenosyl 3-(methylsulfanyl)propylamine + CO2. Its pathway is amine and polyamine biosynthesis; S-adenosylmethioninamine biosynthesis; S-adenosylmethioninamine from S-adenosyl-L-methionine: step 1/1. Catalyzes the decarboxylation of S-adenosylmethionine to S-adenosylmethioninamine (dcAdoMet), the propylamine donor required for the synthesis of the polyamines spermine and spermidine from the diamine putrescine. The polypeptide is S-adenosylmethionine decarboxylase proenzyme (Pseudomonas aeruginosa (strain LESB58)).